We begin with the raw amino-acid sequence, 286 residues long: MLDKLFVLSQYVTPQLAVSRLAGRLADSESTPALKNRVIKWFIGRYGVNMSEAAEPDFTAYPTFNAFFTRALKPGARTIDPAPETLTSPVDGAISQIGQISTDRVFQAKGQSFSLTELLGGDDERAEPFREGEFATIYLSPKDYHRIHMPMAGTLKEMVYVPGKLFSVNPVTAENVPNLFARNERVACLFDTEAGPMAMVLVGAMIVGSVETTWAGVVAPNSGKVTQWQYRGDDAVQFEKGQEMGRFRLGSTVVLVMPKGAVKWQPNQVAEKTVQLGEAFGKLNVK.

Residues Asp91, His148, and Ser251 each act as charge relay system; for autoendoproteolytic cleavage activity in the active site. Ser251 serves as the catalytic Schiff-base intermediate with substrate; via pyruvic acid; for decarboxylase activity. A Pyruvic acid (Ser); by autocatalysis modification is found at Ser251.

The protein belongs to the phosphatidylserine decarboxylase family. PSD-B subfamily. Prokaryotic type I sub-subfamily. As to quaternary structure, heterodimer of a large membrane-associated beta subunit and a small pyruvoyl-containing alpha subunit. Requires pyruvate as cofactor. Post-translationally, is synthesized initially as an inactive proenzyme. Formation of the active enzyme involves a self-maturation process in which the active site pyruvoyl group is generated from an internal serine residue via an autocatalytic post-translational modification. Two non-identical subunits are generated from the proenzyme in this reaction, and the pyruvate is formed at the N-terminus of the alpha chain, which is derived from the carboxyl end of the proenzyme. The autoendoproteolytic cleavage occurs by a canonical serine protease mechanism, in which the side chain hydroxyl group of the serine supplies its oxygen atom to form the C-terminus of the beta chain, while the remainder of the serine residue undergoes an oxidative deamination to produce ammonia and the pyruvoyl prosthetic group on the alpha chain. During this reaction, the Ser that is part of the protease active site of the proenzyme becomes the pyruvoyl prosthetic group, which constitutes an essential element of the active site of the mature decarboxylase.

Its subcellular location is the cell membrane. It catalyses the reaction a 1,2-diacyl-sn-glycero-3-phospho-L-serine + H(+) = a 1,2-diacyl-sn-glycero-3-phosphoethanolamine + CO2. It participates in phospholipid metabolism; phosphatidylethanolamine biosynthesis; phosphatidylethanolamine from CDP-diacylglycerol: step 2/2. Functionally, catalyzes the formation of phosphatidylethanolamine (PtdEtn) from phosphatidylserine (PtdSer). This is Phosphatidylserine decarboxylase proenzyme from Marinobacter nauticus (strain ATCC 700491 / DSM 11845 / VT8) (Marinobacter aquaeolei).